A 594-amino-acid polypeptide reads, in one-letter code: Zinc finger protein 37 (594 aa).

The segment at 1–253 (MATSEPAESD…KPEKAPGSGK (253 aa)) is disordered. Threonine 3 carries the phosphothreonine modification. A KRAB domain is found at 3 to 74 (TSEPAESDAV…GKKASPSSLK (72 aa)). Phosphoserine is present on serine 9. Basic and acidic residues predominate over residues 10–33 (DAVRAKEWEQLEPVQRDVYKDTKL). A compositionally biased stretch (polar residues) spans 34–46 (ENCSNPASMGNQD). Residues 89–111 (QQDDEHREEKQKSQSKLTKEVTL) show a composition bias toward basic and acidic residues. Polar residues predominate over residues 145-158 (KSSSRGKNSNQNSD). 2 stretches are compositionally biased toward basic and acidic residues: residues 159-172 (SLKK…DHRK) and 181-234 (VNKD…TGEK). 12 C2H2-type zinc fingers span residues 255–277 (YECN…QRTH), 283–305 (YECN…QRTH), 311–324 (YECE…GHKH), 339–361 (YKCN…LRSH), 367–389 (YECK…VRTH), 395–417 (YECN…MRIH), 423–445 (FECN…QRTH), 451–473 (YKCD…MRTH), 479–501 (FECN…QRVH), 507–529 (YECV…QRTH), 535–557 (FECY…QRSH), and 563–585 (YECI…MKIH).

The protein belongs to the krueppel C2H2-type zinc-finger protein family. In terms of tissue distribution, expressed in testis and brain.

It localises to the nucleus. Its function is as follows. May have a role in regulating spermiogenesis. The chain is Zinc finger protein 37 (Zfp37) from Mus musculus (Mouse).